A 411-amino-acid polypeptide reads, in one-letter code: Arginine biosynthesis bifunctional protein ArgJ (411 aa).

The substrate site is built by T160, K186, T197, E283, N406, and T411. T197 (nucleophile) is an active-site residue.

Belongs to the ArgJ family. Heterotetramer of two alpha and two beta chains.

It localises to the cytoplasm. It carries out the reaction N(2)-acetyl-L-ornithine + L-glutamate = N-acetyl-L-glutamate + L-ornithine. It catalyses the reaction L-glutamate + acetyl-CoA = N-acetyl-L-glutamate + CoA + H(+). The protein operates within amino-acid biosynthesis; L-arginine biosynthesis; L-ornithine and N-acetyl-L-glutamate from L-glutamate and N(2)-acetyl-L-ornithine (cyclic): step 1/1. It participates in amino-acid biosynthesis; L-arginine biosynthesis; N(2)-acetyl-L-ornithine from L-glutamate: step 1/4. Feedback inhibition by L-ornithine. Catalyzes two activities which are involved in the cyclic version of arginine biosynthesis: the synthesis of N-acetylglutamate from glutamate and acetyl-CoA as the acetyl donor, and of ornithine by transacetylation between N(2)-acetylornithine and glutamate. This Halalkalibacterium halodurans (strain ATCC BAA-125 / DSM 18197 / FERM 7344 / JCM 9153 / C-125) (Bacillus halodurans) protein is Arginine biosynthesis bifunctional protein ArgJ.